We begin with the raw amino-acid sequence, 309 residues long: Protein RTM1 (309 aa).

7 helical membrane passes run A22–W42, T83–A103, I119–F139, F162–A182, L193–F213, W233–V253, and A278–F298.

It belongs to the lipid-translocating exporter (LTE) (TC 9.A.26.1) family.

The protein localises to the membrane. Confers resistance to molasses (to a particular toxic element present in some molasses). In Saccharomyces cerevisiae (Baker's yeast), this protein is Protein RTM1 (RTM1).